The primary structure comprises 346 residues: MENFQKVEKIGEGTYGVVYKAKNKLTGEVVALKKIRLDTETEGVPSTAIREISLLKELNHPNIVKLLDVIHTENKLYLVFEFLHQDLKKFMDASALTGIPLPLIKSYLFQLLQGLAFCHSHRVLHRDLKPQNLLINAEGSIKLADFGLARAFGVPVRTYTHEVVTLWYRAPEILLGCKYYSTAVDIWSLGCIFAEMHLVCTQHHAKCCGEHRRNGRHSLCPLCSYLEVAASQGGGMTAVSAPHPVTRRALFPGDSEIDQLFRIFRTLGTPDEVVWPGVTSMPDYKPSFPKWARQDFSKVVPPLDEDGRSLLSQMLHYDPNKRISAKAALAHPFFQDVTKPVPHLRL.

Residue Met-1 is modified to N-acetylmethionine. Positions 4-334 (FQKVEKIGEG…AKAALAHPFF (331 aa)) constitute a Protein kinase domain. Lys-6 carries the post-translational modification N6-acetyllysine. 10 to 18 (IGEGTYGVV) lines the ATP pocket. Thr-14 carries the phosphothreonine modification. Tyr-15 is modified (phosphotyrosine; by WEE1). Phosphotyrosine is present on Tyr-19. Residues Lys-33, 81 to 83 (EFL), and Asp-86 each bind ATP. Asp-127 (proton acceptor) is an active-site residue. ATP-binding positions include 129-132 (KPQN) and Asp-145. Mg(2+) is bound by residues Asn-132 and Asp-145. Thr-160 carries the post-translational modification Phosphothreonine; by CAK and CCRK. Ser-218 carries the post-translational modification Phosphoserine.

It belongs to the protein kinase superfamily. CMGC Ser/Thr protein kinase family. CDC2/CDKX subfamily. As to quaternary structure, found in a complex with CABLES1, CCNA1 and CCNE1. Interacts with CABLES1. Interacts with UHRF2. Part of a complex consisting of UHRF2, CDK2 and CCNE1. Interacts with the Speedy/Ringo proteins SPDYA and SPDYC. Interaction with SPDYA promotes kinase activation via a conformation change that alleviates obstruction of the substrate-binding cleft by the T-loop. Found in a complex with both SPDYA and CDKN1B/KIP1. Binds to RB1 and CDK7. Binding to CDKN1A (p21) leads to CDK2/cyclin E inactivation at the G1-S phase DNA damage checkpoint, thereby arresting cells at the G1-S transition during DNA repair. Associated with PTPN6 and beta-catenin/CTNNB1. Interacts with CACUL1. May interact with CEP63. Interacts with ANKRD17. Interacts with CEBPA (when phosphorylated). Forms a ternary complex with CCNA2 and CDKN1B; CDKN1B inhibits the kinase activity of CDK2 through conformational rearrangements. Interacts with cyclins A, B1, B3, D, or E. Interacts with CDK2AP2. Mg(2+) is required as a cofactor. Phosphorylated at Thr-160 by CDK7 in a CAK complex. Phosphorylation at Thr-160 promotes kinase activity, whereas phosphorylation at Tyr-15 by WEE1 reduces slightly kinase activity. Phosphorylated on Thr-14 and Tyr-15 during S and G2 phases before being dephosphorylated by CDC25A. In terms of processing, nitrosylated after treatment with nitric oxide (DETA-NO).

The protein localises to the cytoplasm. It localises to the cytoskeleton. It is found in the microtubule organizing center. The protein resides in the centrosome. Its subcellular location is the nucleus. The protein localises to the cajal body. It localises to the endosome. It catalyses the reaction L-seryl-[protein] + ATP = O-phospho-L-seryl-[protein] + ADP + H(+). The catalysed reaction is L-threonyl-[protein] + ATP = O-phospho-L-threonyl-[protein] + ADP + H(+). Its activity is regulated as follows. Phosphorylation at Thr-14 or Tyr-15 inactivates the enzyme, while phosphorylation at Thr-160 activates it. Stimulated by MYC. Inactivated by CDKN1A (p21). Serine/threonine-protein kinase involved in the control of the cell cycle; essential for meiosis, but dispensable for mitosis. Phosphorylates CABLES1, CTNNB1, CDK2AP2, ERCC6, NBN, USP37, p53/TP53, NPM1, CDK7, RB1, BRCA2, MYC, NPAT, EZH2. Triggers duplication of centrosomes and DNA. Acts at the G1-S transition to promote the E2F transcriptional program and the initiation of DNA synthesis, and modulates G2 progression; controls the timing of entry into mitosis/meiosis by controlling the subsequent activation of cyclin B/CDK1 by phosphorylation, and coordinates the activation of cyclin B/CDK1 at the centrosome and in the nucleus. Crucial role in orchestrating a fine balance between cellular proliferation, cell death, and DNA repair in embryonic stem cells (ESCs). Activity of CDK2 is maximal during S phase and G2; activated by interaction with cyclin E during the early stages of DNA synthesis to permit G1-S transition, and subsequently activated by cyclin A2 (cyclin A1 in germ cells) during the late stages of DNA replication to drive the transition from S phase to mitosis, the G2 phase. EZH2 phosphorylation promotes H3K27me3 maintenance and epigenetic gene silencing. Cyclin E/CDK2 prevents oxidative stress-mediated Ras-induced senescence by phosphorylating MYC. Involved in G1-S phase DNA damage checkpoint that prevents cells with damaged DNA from initiating mitosis; regulates homologous recombination-dependent repair by phosphorylating BRCA2, this phosphorylation is low in S phase when recombination is active, but increases as cells progress towards mitosis. In response to DNA damage, double-strand break repair by homologous recombination a reduction of CDK2-mediated BRCA2 phosphorylation. Involved in regulation of telomere repair by mediating phosphorylation of NBN. Phosphorylation of RB1 disturbs its interaction with E2F1. NPM1 phosphorylation by cyclin E/CDK2 promotes its dissociation from unduplicated centrosomes, thus initiating centrosome duplication. Cyclin E/CDK2-mediated phosphorylation of NPAT at G1-S transition and until prophase stimulates the NPAT-mediated activation of histone gene transcription during S phase. Required for vitamin D-mediated growth inhibition by being itself inactivated. Involved in the nitric oxide- (NO) mediated signaling in a nitrosylation/activation-dependent manner. USP37 is activated by phosphorylation and thus triggers G1-S transition. CTNNB1 phosphorylation regulates insulin internalization. Phosphorylates FOXP3 and negatively regulates its transcriptional activity and protein stability. Phosphorylates ERCC6 which is essential for its chromatin remodeling activity at DNA double-strand breaks. Acts as a regulator of the phosphatidylinositol 3-kinase/protein kinase B signal transduction by mediating phosphorylation of the C-terminus of protein kinase B (PKB/AKT1 and PKB/AKT2), promoting its activation. The polypeptide is Cyclin-dependent kinase 2 (Cdk2) (Mus musculus (Mouse)).